A 788-amino-acid polypeptide reads, in one-letter code: Integrin beta-3 (788 aa).

The N-terminal stretch at 1–26 (MRARPRPRPLWATVLALGALAGVGVG) is a signal peptide. Topologically, residues 27 to 718 (GPNICTTRGV…EEPECPKGPD (692 aa)) are extracellular. Residues 30–76 (ICTTRGVSSCQQCLAVSPMCAWCSDEALPLGSPRCDLKENLLKDNCA) enclose the PSI domain. Cystine bridges form between C31–C49, C39–C461, C42–C64, C52–C75, C203–C210, C258–C299, C400–C412, C432–C459, C463–C483, C474–C486, C488–C497, C499–C529, C512–C527, C521–C532, C534–C547, C549–C570, C554–C568, C562–C573, and C575–C584. N-linked (GlcNAc...) asparagine glycosylation occurs at N125. One can recognise a VWFA domain in the interval 135–377 (DYPVDIYYLM…QLIVDAYGKI (243 aa)). The Mg(2+) site is built by S147 and S149. Ca(2+)-binding residues include S149, D152, D153, and D184. The tract at residues 203 to 210 (CYDMKTTC) is involved in CX3CL1-, NRG1-, FGF1- and IGF1-binding. Ca(2+) is bound by residues N241, D243, P245, E246, and D277. E246 lines the Mg(2+) pocket. The CX3CL1-binding stretch occupies residues 293 to 313 (QPNDGQCHVGSDNHYSASTTM). N346 carries an N-linked (GlcNAc...) asparagine glycan. A Ca(2+)-binding site is contributed by M361. An N-linked (GlcNAc...) asparagine glycan is attached at N397. 4 consecutive I-EGF domains span residues 463–498 (CQAQ…SQCE), 499–548 (CSEE…KYCE), 549–585 (CDDF…YYCN), and 586–625 (CTTR…DTCE). N478 carries an N-linked (GlcNAc...) asparagine glycan. An N-linked (GlcNAc...) asparagine glycan is attached at N585. Cystine bridges form between C586/C609, C593/C607, C601/C612, C614/C624, C627/C630, C634/C681, C640/C661, C643/C657, and C689/C713. N-linked (GlcNAc...) asparagine glycosylation occurs at N680. Residues 719–741 (ILVVLLSVMGAILLIGLAALLIW) form a helical membrane-spanning segment. Over 742–788 (KLLITIHDRKEFAKFEEERARAKWDTANNPLYKEATSTFTNITYRGT) the chain is Cytoplasmic. T767 carries the post-translational modification Phosphothreonine. Y773 carries the phosphotyrosine modification. An LIR motif is present at residues 777 to 783 (TSTFTNI). A Phosphothreonine; by PDPK1 and PKB/AKT1; in vitro modification is found at T779. At Y785 the chain carries Phosphotyrosine.

It belongs to the integrin beta chain family. Heterodimer of an alpha and a beta subunit. Beta-3 (ITGB3) associates with either alpha-IIb (ITGA2B) or alpha-V (ITGAV). Isoform Beta-3C interacts with FLNB. Interacts with COMP. Interacts with PDIA6 following platelet stimulation. Interacts with SYK; upon activation by ITGB3 promotes platelet adhesion. Interacts with MYO10. Interacts with DAB2. Interacts with FERMT2. Interacts with EMP2; regulates the levels of the heterodimer ITGA5:ITGB3 integrin expression on the plasma membrane. Integrin ITGAV:ITGB3 interacts with FBLN5 (via N-terminus). ITGAV:ITGB3 interacts with CCN3. ITGAV:ITGB3 and ITGA2B:ITGB3 interact with SELP (via C-type lectin domain); the interaction mediates cell-cell interaction and adhesion. ITGAV:ITGB3 is found in a ternary complex with CX3CR1 and CX3CL1. ITGAV:ITGB3 is found in a ternary complex with NRG1 and ERBB3. ITGAV:ITGB3 is found in a ternary complex with FGF1 and FGFR1. ITGAV:ITGB3 interacts with FGF2; it is likely that FGF2 can simultaneously bind ITGAV:ITGB3 and FGF receptors. ITGAV:ITGB3 binds to IL1B. ITGAV:ITGB3 is found in a ternary complex with IGF1 and IGF1R. ITGAV:ITGB3 interacts with IGF2. ITGAV:ITGB3 interacts with FBN1. ITGAV:ITGB3 interacts with CD9, CD81 and CD151 (via second extracellular domain). Interacts (via the allosteric site (site 2)) with CXCL12 in a CXCR4-independent manner. Interacts with MXRA8/DICAM; the interaction inhibits ITGAV:ITGB3 heterodimer formation. ITGAV:ITGB3 interacts with PTN. Forms a complex with PTPRZ1 and PTN that stimulates endothelial cell migration through ITGB3 Tyr-773 phosphorylation. ITGAV:ITGB3 interacts with SLC6A4. Interacts with SLC6A4 (via C-terminus); this interaction regulates SLC6A4 trafficking. ITGA2B:ITGB3 interacts with PPIA/CYPA; the interaction is ROS and PPIase activity-dependent and is increased in the presence of thrombin. Interacts with tensin TNS3; TNS3 also interacts with PEAK1, thus acting as an adapter molecule to bridge the association of PEAK1 with ITGB3. Interacts with TM4SF19. As to quaternary structure, (Microbial infection) Integrin ITGAV:ITGB3 interacts with herpes virus 8/HHV-8 glycoprotein B. In terms of assembly, (Microbial infection) Integrin ITGAV:ITGB3 interacts with coxsackievirus A9 capsid proteins. (Microbial infection) Interacts with Hantaan virus glycoprotein G. As to quaternary structure, (Microbial infection) Integrin ITGAV:ITGB3 interacts with cytomegalovirus/HHV-5 gH:gL proteins. In terms of assembly, (Microbial infection) Integrin ITGA5:ITGB3 interacts with human metapneumovirus fusion protein. (Microbial infection) Integrin ITGAV:ITGB3 interacts with human parechovirus 1 capsid proteins. As to quaternary structure, (Microbial infection) Integrin ITGAV:ITGB3 interacts with west nile virus envelope protein E. In terms of assembly, (Microbial infection) Interacts with HIV-1 Tat. ITGAV:ITGB3 interacts with AGRA2. Post-translationally, phosphorylated on tyrosine residues in response to thrombin-induced platelet aggregation. Probably involved in outside-in signaling. A peptide (AA 740-762) is capable of binding GRB2 only when both Tyr-773 and Tyr-785 are phosphorylated. Phosphorylation of Thr-779 inhibits SHC binding. As to expression, isoform beta-3A and isoform beta-3C are widely expressed. Isoform beta-3A is specifically expressed in osteoblast cells; isoform beta-3C is specifically expressed in prostate and testis.

The protein localises to the cell membrane. It localises to the cell projection. The protein resides in the lamellipodium membrane. It is found in the cell junction. Its subcellular location is the focal adhesion. The protein localises to the postsynaptic cell membrane. It localises to the synapse. In terms of biological role, integrin alpha-V/beta-3 (ITGAV:ITGB3) is a receptor for cytotactin, fibronectin, laminin, matrix metalloproteinase-2, osteopontin, osteomodulin, prothrombin, thrombospondin, vitronectin and von Willebrand factor. Integrin alpha-IIb/beta-3 (ITGA2B:ITGB3) is a receptor for fibronectin, fibrinogen, plasminogen, prothrombin, thrombospondin and vitronectin. Integrins alpha-IIb/beta-3 and alpha-V/beta-3 recognize the sequence R-G-D in a wide array of ligands. Integrin alpha-IIb/beta-3 recognizes the sequence H-H-L-G-G-G-A-K-Q-A-G-D-V in fibrinogen gamma chain. Following activation integrin alpha-IIb/beta-3 brings about platelet/platelet interaction through binding of soluble fibrinogen. This step leads to rapid platelet aggregation which physically plugs ruptured endothelial surface. Fibrinogen binding enhances SELP expression in activated platelets. ITGAV:ITGB3 binds to fractalkine (CX3CL1) and acts as its coreceptor in CX3CR1-dependent fractalkine signaling. ITGAV:ITGB3 binds to NRG1 (via EGF domain) and this binding is essential for NRG1-ERBB signaling. ITGAV:ITGB3 binds to FGF1 and this binding is essential for FGF1 signaling. ITGAV:ITGB3 binds to FGF2 and this binding is essential for FGF2 signaling. ITGAV:ITGB3 binds to IGF1 and this binding is essential for IGF1 signaling. ITGAV:ITGB3 binds to IGF2 and this binding is essential for IGF2 signaling. ITGAV:ITGB3 binds to IL1B and this binding is essential for IL1B signaling. ITGAV:ITGB3 binds to PLA2G2A via a site (site 2) which is distinct from the classical ligand-binding site (site 1) and this induces integrin conformational changes and enhanced ligand binding to site 1. ITGAV:ITGB3 acts as a receptor for fibrillin-1 (FBN1) and mediates R-G-D-dependent cell adhesion to FBN1. In brain, plays a role in synaptic transmission and plasticity. Involved in the regulation of the serotonin neurotransmission, is required to localize to specific compartments within the synapse the serotonin receptor SLC6A4 and for an appropriate reuptake of serotonin. Controls excitatory synaptic strength by regulating GRIA2-containing AMPAR endocytosis, which affects AMPAR abundance and composition. ITGAV:ITGB3 act as a receptor for CD40LG. ITGAV:ITGB3 acts as a receptor for IBSP and promotes cell adhesion and migration to IBSP. Functionally, (Microbial infection) Integrin ITGAV:ITGB3 acts as a receptor for Herpes virus 8/HHV-8. Its function is as follows. (Microbial infection) Integrin ITGAV:ITGB3 acts as a receptor for Coxsackievirus A9. (Microbial infection) Acts as a receptor for Hantaan virus. In terms of biological role, (Microbial infection) Integrin ITGAV:ITGB3 acts as a receptor for Cytomegalovirus/HHV-5. Functionally, (Microbial infection) Integrin ITGA5:ITGB3 acts as a receptor for Human metapneumovirus. Its function is as follows. (Microbial infection) Integrin ITGAV:ITGB3 acts aP05556s a receptor for Human parechovirus 1. (Microbial infection) Integrin ITGAV:ITGB3 acts as a receptor for West nile virus. In terms of biological role, (Microbial infection) In case of HIV-1 infection, the interaction with extracellular viral Tat protein seems to enhance angiogenesis in Kaposi's sarcoma lesions. In Homo sapiens (Human), this protein is Integrin beta-3.